The chain runs to 123 residues: Small ribosomal subunit protein uS12 (123 aa).

Aspartate 89 bears the 3-methylthioaspartic acid mark.

The protein belongs to the universal ribosomal protein uS12 family. In terms of assembly, part of the 30S ribosomal subunit. Contacts proteins S8 and S17. May interact with IF1 in the 30S initiation complex.

In terms of biological role, with S4 and S5 plays an important role in translational accuracy. Functionally, interacts with and stabilizes bases of the 16S rRNA that are involved in tRNA selection in the A site and with the mRNA backbone. Located at the interface of the 30S and 50S subunits, it traverses the body of the 30S subunit contacting proteins on the other side and probably holding the rRNA structure together. The combined cluster of proteins S8, S12 and S17 appears to hold together the shoulder and platform of the 30S subunit. The chain is Small ribosomal subunit protein uS12 from Pelagibacter ubique (strain HTCC1062).